Consider the following 39-residue polypeptide: Beta-theraphotoxin-Cm2a (39 aa).

3 disulfides stabilise this stretch: Cys-7–Cys-21, Cys-14–Cys-26, and Cys-20–Cys-33. Phe-39 is subject to Phenylalanine amide.

In terms of tissue distribution, expressed by the venom gland.

It localises to the secreted. Inhibits mammalian voltage-gated sodium channel subtypes Nav1.5/SCN5A and Nav1.8/SCN10A by shifting the voltage dependence of channel activation to more depolarized potentials and by blocking the inward component of the sodium current. In vivo, this toxin causes erect, elevated tail, initial partial ataxia, followed by recovery over approximately 1 hour after injection and the progressive development of shaking. Although paralysis subsides, the body tremors never cease and persist until the end of the experiment. This is Beta-theraphotoxin-Cm2a from Ceratogyrus marshalli (Straighthorned baboon tarantula).